We begin with the raw amino-acid sequence, 211 residues long: Troponin I, cardiac muscle (211 aa).

A disordered region spans residues 1-24; that stretch reads MADESSDAAGEPQPAPAPVRRRSS. At A2 the chain carries N-acetylalanine. 2 positions are modified to phosphoserine: S5 and S6. Phosphoserine; by PKA and PKD/PRKD1 is present on residues S23 and S24. A Phosphotyrosine modification is found at Y27. T32 bears the Phosphothreonine; by STK4/MST1 mark. Residues 33-80 are involved in binding TNC; it reads EPHAKKKSKISASRKLQLKTLMLQIAKQEMEREAEERRGEKGRVLRTR. 2 positions are modified to phosphoserine; by PKC/PRKCE: S43 and S45. At T52 the chain carries Phosphothreonine; by STK4/MST1. The residue at position 79 (T79) is a Phosphothreonine. A phosphothreonine; by STK4/MST1 mark is found at T130 and T144. The tract at residues 130-151 is involved in binding TNC and actin; the sequence is TQKIYDLRGKFKRPTLRRVRIS. Residues S151, S167, and S200 each carry the phosphoserine modification.

Belongs to the troponin I family. Interacts with TRIM63. Binds to actin and tropomyosin. Interacts with STK4/MST1. Phosphorylated at Ser-23 and Ser-24 by PRKD1; phosphorylation reduces myofilament calcium sensitivity. Phosphorylated preferentially at Thr-32. Phosphorylation by STK4/MST1 alters its binding affinity to TNNC1 (cardiac Tn-C) and TNNT2 (cardiac Tn-T). Phosphorylated at Ser-43 and Ser-45 by PRKCE; phosphorylation increases myocardium contractile dysfunction.

In terms of biological role, troponin I is the inhibitory subunit of troponin, the thin filament regulatory complex which confers calcium-sensitivity to striated muscle actomyosin ATPase activity. The protein is Troponin I, cardiac muscle (Tnni3) of Mus musculus (Mouse).